The sequence spans 330 residues: Phenylalanine--tRNA ligase alpha subunit (330 aa).

Glu-254 is a binding site for Mg(2+).

This sequence belongs to the class-II aminoacyl-tRNA synthetase family. Phe-tRNA synthetase alpha subunit type 1 subfamily. As to quaternary structure, tetramer of two alpha and two beta subunits. Mg(2+) is required as a cofactor.

It is found in the cytoplasm. It carries out the reaction tRNA(Phe) + L-phenylalanine + ATP = L-phenylalanyl-tRNA(Phe) + AMP + diphosphate + H(+). The sequence is that of Phenylalanine--tRNA ligase alpha subunit (pheS) from Neisseria meningitidis serogroup A / serotype 4A (strain DSM 15465 / Z2491).